The following is a 498-amino-acid chain: MNVSFITQYTSSIDADAAILLQVEKFEKTFGLELVDPNRIIKKGYLIENFQGSFGSQIKFLYLEGSPFAFVKVVGLGKEQSINDETWLKAGGLCVSEIKNYPKKVVVFADALGIDVSTTQIMNFVLGALLKQYSFECYYTDKKKSKQKNKNILELVIITKNAENCQKELKQVQAICEGVNLTKELVNEPANILGTEEFVEKIKKLEKLNVKVQVLDKEKLKELGMNALLSVAQGSSRPPYLVIMQWNGSDNKEEEPLAFVGKGVVFDSGGISIKHSSGMEDMKADMGGAGTVVGLMHTLATRKAKINVTGVVGLVENMPSCHAQRPGDIVTSMSGQTIEVINTDAEGRMVLADVLWYCKTKIQPKLIVDLATLTGAIRIALGEQHAGLFSNNEALAKQIIKSGEATSEKVWQLPLGLEYDKLIDSKFADMKNSSGGSAGSITAAQFLKRFVDEKTPWAHIDIAAVCMGNKLNEFNNSWASGFGVRLLNYLIKNYYEQK.

The Mn(2+) site is built by K262 and D267. K274 is a catalytic residue. Positions 285, 344, and 346 each coordinate Mn(2+). R348 is a catalytic residue.

Belongs to the peptidase M17 family. Requires Mn(2+) as cofactor.

The protein localises to the cytoplasm. The enzyme catalyses Release of an N-terminal amino acid, Xaa-|-Yaa-, in which Xaa is preferably Leu, but may be other amino acids including Pro although not Arg or Lys, and Yaa may be Pro. Amino acid amides and methyl esters are also readily hydrolyzed, but rates on arylamides are exceedingly low.. It catalyses the reaction Release of an N-terminal amino acid, preferentially leucine, but not glutamic or aspartic acids.. Presumably involved in the processing and regular turnover of intracellular proteins. Catalyzes the removal of unsubstituted N-terminal amino acids from various peptides. The polypeptide is Probable cytosol aminopeptidase (Phytoplasma mali (strain AT)).